The chain runs to 461 residues: Probable ribonuclease FAU-1 (461 aa).

The S1 motif domain occupies 89–158; sequence GAVFYGEVTE…ARPSLATALR (70 aa).

This sequence belongs to the FAU-1 family.

Its function is as follows. Probable RNase involved in rRNA stability through maturation and/or degradation of precursor rRNAs. Binds to RNA in loop regions with AU-rich sequences. This is Probable ribonuclease FAU-1 from Natronomonas pharaonis (strain ATCC 35678 / DSM 2160 / CIP 103997 / JCM 8858 / NBRC 14720 / NCIMB 2260 / Gabara) (Halobacterium pharaonis).